Consider the following 20-residue polypeptide: Isocitrate dehydrogenase [NADP] (20 aa).

This sequence belongs to the isocitrate and isopropylmalate dehydrogenases family. It depends on Mn(2+) as a cofactor. Mg(2+) serves as cofactor.

Its subcellular location is the cytoplasm. It catalyses the reaction D-threo-isocitrate + NADP(+) = 2-oxoglutarate + CO2 + NADPH. This is Isocitrate dehydrogenase [NADP] from Naegleria fowleri (Brain eating amoeba).